The sequence spans 72 residues: Metallothionein-like protein type 2 (72 aa).

It belongs to the metallothionein superfamily. Type 15 family.

Metallothioneins have a high content of cysteine residues that bind various heavy metals. The polypeptide is Metallothionein-like protein type 2 (Solanum lycopersicum (Tomato)).